The following is a 417-amino-acid chain: Putative nickel insertion protein (417 aa).

The interval 69–99 (HEHHHDHGHHHHGHGHHHDHTHDHHHHHEHR) is disordered. The segment covering 74–99 (DHGHHHHGHGHHHDHTHDHHHHHEHR) has biased composition (basic residues).

It belongs to the LarC family.

In Maridesulfovibrio salexigens (strain ATCC 14822 / DSM 2638 / NCIMB 8403 / VKM B-1763) (Desulfovibrio salexigens), this protein is Putative nickel insertion protein.